The following is a 263-amino-acid chain: tRNA pseudouridine synthase A (263 aa).

Catalysis depends on Asp-51, which acts as the Nucleophile. A substrate-binding site is contributed by Tyr-109.

Belongs to the tRNA pseudouridine synthase TruA family. In terms of assembly, homodimer.

The enzyme catalyses uridine(38/39/40) in tRNA = pseudouridine(38/39/40) in tRNA. In terms of biological role, formation of pseudouridine at positions 38, 39 and 40 in the anticodon stem and loop of transfer RNAs. The polypeptide is tRNA pseudouridine synthase A (Mannheimia succiniciproducens (strain KCTC 0769BP / MBEL55E)).